The following is a 270-amino-acid chain: Formamidopyrimidine-DNA glycosylase (270 aa).

Pro2 acts as the Schiff-base intermediate with DNA in catalysis. The active-site Proton donor is the Glu3. Residue Lys57 is the Proton donor; for beta-elimination activity of the active site. DNA is bound by residues His90, Arg109, and Lys150. The segment at 235 to 269 (LVYGNKDKPCPRCGTKIKSIIIGQRNSFFCPQCQK) adopts an FPG-type zinc-finger fold. The active-site Proton donor; for delta-elimination activity is Arg259.

It belongs to the FPG family. In terms of assembly, monomer. Zn(2+) serves as cofactor.

It carries out the reaction Hydrolysis of DNA containing ring-opened 7-methylguanine residues, releasing 2,6-diamino-4-hydroxy-5-(N-methyl)formamidopyrimidine.. The catalysed reaction is 2'-deoxyribonucleotide-(2'-deoxyribose 5'-phosphate)-2'-deoxyribonucleotide-DNA = a 3'-end 2'-deoxyribonucleotide-(2,3-dehydro-2,3-deoxyribose 5'-phosphate)-DNA + a 5'-end 5'-phospho-2'-deoxyribonucleoside-DNA + H(+). Involved in base excision repair of DNA damaged by oxidation or by mutagenic agents. Acts as a DNA glycosylase that recognizes and removes damaged bases. Has a preference for oxidized purines, such as 7,8-dihydro-8-oxoguanine (8-oxoG). Has AP (apurinic/apyrimidinic) lyase activity and introduces nicks in the DNA strand. Cleaves the DNA backbone by beta-delta elimination to generate a single-strand break at the site of the removed base with both 3'- and 5'-phosphates. This chain is Formamidopyrimidine-DNA glycosylase, found in Histophilus somni (strain 2336) (Haemophilus somnus).